Consider the following 115-residue polypeptide: Large ribosomal subunit protein bL19 (115 aa).

It belongs to the bacterial ribosomal protein bL19 family.

This protein is located at the 30S-50S ribosomal subunit interface and may play a role in the structure and function of the aminoacyl-tRNA binding site. This is Large ribosomal subunit protein bL19 from Streptococcus mutans serotype c (strain ATCC 700610 / UA159).